A 530-amino-acid polypeptide reads, in one-letter code: ATP synthase subunit alpha (530 aa).

172–179 (GDRQTGKT) contributes to the ATP binding site.

It belongs to the ATPase alpha/beta chains family. In terms of assembly, F-type ATPases have 2 components, CF(1) - the catalytic core - and CF(0) - the membrane proton channel. CF(1) has five subunits: alpha(3), beta(3), gamma(1), delta(1), epsilon(1). CF(0) has three main subunits: a(1), b(2) and c(9-12). The alpha and beta chains form an alternating ring which encloses part of the gamma chain. CF(1) is attached to CF(0) by a central stalk formed by the gamma and epsilon chains, while a peripheral stalk is formed by the delta and b chains.

It localises to the cell inner membrane. The enzyme catalyses ATP + H2O + 4 H(+)(in) = ADP + phosphate + 5 H(+)(out). Its function is as follows. Produces ATP from ADP in the presence of a proton gradient across the membrane. The alpha chain is a regulatory subunit. The chain is ATP synthase subunit alpha from Phocaeicola vulgatus (strain ATCC 8482 / DSM 1447 / JCM 5826 / CCUG 4940 / NBRC 14291 / NCTC 11154) (Bacteroides vulgatus).